The sequence spans 71 residues: DNA-directed RNA polymerase subunit epsilon (71 aa).

The protein belongs to the RNA polymerase subunit epsilon family. In terms of assembly, RNAP is composed of a core of 2 alpha, a beta and a beta' subunit. The core is associated with a delta subunit, and at least one of epsilon or omega. When a sigma factor is associated with the core the holoenzyme is formed, which can initiate transcription.

It carries out the reaction RNA(n) + a ribonucleoside 5'-triphosphate = RNA(n+1) + diphosphate. A non-essential component of RNA polymerase (RNAP). The sequence is that of DNA-directed RNA polymerase subunit epsilon from Anoxybacillus flavithermus (strain DSM 21510 / WK1).